The primary structure comprises 104 residues: Large ribosomal subunit protein uL23 (104 aa).

This sequence belongs to the universal ribosomal protein uL23 family. Part of the 50S ribosomal subunit. Contacts protein L29, and trigger factor when it is bound to the ribosome.

Functionally, one of the early assembly proteins it binds 23S rRNA. One of the proteins that surrounds the polypeptide exit tunnel on the outside of the ribosome. Forms the main docking site for trigger factor binding to the ribosome. This chain is Large ribosomal subunit protein uL23, found in Nostoc sp. (strain PCC 7120 / SAG 25.82 / UTEX 2576).